The following is a 254-amino-acid chain: Alcohol dehydrogenase 1 (254 aa).

An NAD(+)-binding site is contributed by 10 to 33; that stretch reads FVAGLGGIGFDTSREIVKSGPKNL. Substrate is bound at residue S138. Y151 (proton acceptor) is an active-site residue.

This sequence belongs to the short-chain dehydrogenases/reductases (SDR) family. In terms of assembly, homodimer.

It carries out the reaction a primary alcohol + NAD(+) = an aldehyde + NADH + H(+). The enzyme catalyses a secondary alcohol + NAD(+) = a ketone + NADH + H(+). The protein is Alcohol dehydrogenase 1 (Adh1) of Drosophila navojoa (Fruit fly).